The following is an 819-amino-acid chain: Glycine-rich domain-containing protein 1 (819 aa).

Its function is as follows. Plays a regulatory role in abscisic acid (ABA) signaling and tolerance to abiotic stress during germination. May be involved in the regulation of the ABI transcriptional factors. In Arabidopsis thaliana (Mouse-ear cress), this protein is Glycine-rich domain-containing protein 1.